A 79-amino-acid polypeptide reads, in one-letter code: Small ribosomal subunit protein bS18 (79 aa).

The protein belongs to the bacterial ribosomal protein bS18 family. In terms of assembly, part of the 30S ribosomal subunit. Forms a tight heterodimer with protein bS6.

Functionally, binds as a heterodimer with protein bS6 to the central domain of the 16S rRNA, where it helps stabilize the platform of the 30S subunit. The protein is Small ribosomal subunit protein bS18 of Streptococcus pyogenes serotype M49 (strain NZ131).